The primary structure comprises 642 residues: MSAATETEVREFQTEVSQLLDLMIHALYSNKEIFLRELISNASDANDKLRFAGLSDDSLFEGDSELTIKLEFDKEAGTFSIMDNGIGMSRDEVISNIGTIAKSGTKEFFKSLTGDQQRDAHLIGQFGVGFYSSFIVADKVTLETRKAGAGAEQGVRWISAGDGSYTLENMEKAERGTRITLHMREDEKEFLDAWRLRSIVRKFSDHVTWPVKMLEELPPAPPAKEGEEPEPPKTPEWETVNKASALWTLSKNDITEDEYKEFYKHVGHDFEDPMEWVHARMEGRMEYTLLLYIPGRAPFDLWDRDRRGGLKLFVRRVFIMDTSEELLPRYLRFVRGVIDSADLPLNVSREILQQNRQVEAIKKGLVHKVLGMLEEMLKNDPEKYATFWKEFGMVLKEGMIEDFANKERIAKLCRFSTTHDGERVPKIALADYVERMKEGQEAIYYVTGESFEACSSSPHLEIFRKKGIEVLLLSDRVDEWTVTHLTEFDGKPLQAITKGELDLSKFAGGEEEAKDEEAEKAQEEALKPITERMAKVLEGQVKEVRLSHRLTESPACLVGDAHDMSATLERLLKEAGQEVPTAKRILEINPSHALLKRLADEADEEKFGELTHVLHDQALLAEGGQLKDPSQFVKRLNKLLMG.

Residues methionine 1–arginine 349 are a; substrate-binding. The tract at residues glutamate 216 to glutamate 238 is disordered. Residues lysine 224–glutamate 236 are compositionally biased toward basic and acidic residues. The segment at glutamate 350 to arginine 570 is b. The interval leucine 571 to glycine 642 is c.

The protein belongs to the heat shock protein 90 family. As to quaternary structure, homodimer.

It is found in the cytoplasm. Molecular chaperone. Has ATPase activity. The protein is Chaperone protein HtpG of Magnetococcus marinus (strain ATCC BAA-1437 / JCM 17883 / MC-1).